Reading from the N-terminus, the 381-residue chain is Spermidine/putrescine import ATP-binding protein PotA (381 aa).

Residues 22 to 252 form the ABC transporter domain; it reads VELRNVFKFF…PKTSFVADFI (231 aa). 54 to 61 serves as a coordination point for ATP; sequence GPSGCGKT.

It belongs to the ABC transporter superfamily. Spermidine/putrescine importer (TC 3.A.1.11.1) family. As to quaternary structure, the complex is composed of two ATP-binding proteins (PotA), two transmembrane proteins (PotB and PotC) and a solute-binding protein (PotD).

The protein localises to the cell inner membrane. The catalysed reaction is ATP + H2O + polyamine-[polyamine-binding protein]Side 1 = ADP + phosphate + polyamineSide 2 + [polyamine-binding protein]Side 1.. In terms of biological role, part of the ABC transporter complex PotABCD involved in spermidine/putrescine import. Responsible for energy coupling to the transport system. This Nostoc sp. (strain PCC 7120 / SAG 25.82 / UTEX 2576) protein is Spermidine/putrescine import ATP-binding protein PotA.